Reading from the N-terminus, the 323-residue chain is Chitinase 1 (323 aa).

An N-terminal signal peptide occupies residues 1–20 (MRALAVVVVATAFAVVAVRG). In terms of domain architecture, Chitin-binding type-1 spans 21–61 (EQCGSQAGGALCPNCLCCSQYGWCGSTSAYCGSGCQSQCSG). 8 disulfides stabilise this stretch: C23/C38, C32/C44, C35/C63, C37/C51, C55/C59, C100/C162, C176/C184, and C283/C315. E144 serves as the catalytic Proton donor.

The protein belongs to the glycosyl hydrolase 19 family. Chitinase class I subfamily. In terms of tissue distribution, expressed in roots, leaves, sheaths and meristems.

The enzyme catalyses Random endo-hydrolysis of N-acetyl-beta-D-glucosaminide (1-&gt;4)-beta-linkages in chitin and chitodextrins.. In terms of biological role, hydrolyzes chitin and may play a role in defense against fungal pathogens containing chitin. In Oryza sativa subsp. japonica (Rice), this protein is Chitinase 1 (Cht1).